A 498-amino-acid chain; its full sequence is Mitogen-activated protein kinase 15 (498 aa).

In terms of domain architecture, Protein kinase spans 13–304; that stretch reads YKIEEVIGKG…AEEALADPYF (292 aa). ATP contacts are provided by residues 19–27 and Lys-42; that span reads IGKGSYGVV. The Proton acceptor role is filled by Asp-139. Thr-175 bears the Phosphothreonine mark. The short motif at 175–177 is the TXY element; it reads TDY. Tyr-177 is subject to Phosphotyrosine. Disordered regions lie at residues 388–411 and 470–498; these read STAA…SDDR and STAE…GSYP. The segment covering 486 to 498 has biased composition (polar residues); the sequence is LATNTVSPRGSYP.

It belongs to the protein kinase superfamily. CMGC Ser/Thr protein kinase family. MAP kinase subfamily. Dually phosphorylated on Thr-175 and Tyr-177, which activates the enzyme.

It carries out the reaction L-seryl-[protein] + ATP = O-phospho-L-seryl-[protein] + ADP + H(+). It catalyses the reaction L-threonyl-[protein] + ATP = O-phospho-L-threonyl-[protein] + ADP + H(+). With respect to regulation, activated by threonine and tyrosine phosphorylation. The sequence is that of Mitogen-activated protein kinase 15 (MPK15) from Oryza sativa subsp. japonica (Rice).